A 291-amino-acid polypeptide reads, in one-letter code: Protease HtpX (291 aa).

2 consecutive transmembrane segments (helical) span residues 4 to 24 (IALF…VLNI) and 36 to 56 (LSGL…ISLM). Histidine 143 contacts Zn(2+). Glutamate 144 is an active-site residue. Histidine 147 contributes to the Zn(2+) binding site. Helical transmembrane passes span 151 to 171 (GDMI…IFLS) and 199 to 219 (FIVS…LTMW). Residue glutamate 225 participates in Zn(2+) binding.

Belongs to the peptidase M48B family. Zn(2+) is required as a cofactor.

Its subcellular location is the cell inner membrane. The chain is Protease HtpX from Aliivibrio fischeri (strain ATCC 700601 / ES114) (Vibrio fischeri).